The following is a 428-amino-acid chain: 26S proteasome regulatory subunit 6B homolog (428 aa).

The residue at position 1 (Met-1) is an N-acetylmethionine. Position 213 to 220 (213 to 220 (GPPGTGKT)) interacts with ATP. A Glycyl lysine isopeptide (Lys-Gly) (interchain with G-Cter in ubiquitin) cross-link involves residue Lys-280.

The protein belongs to the AAA ATPase family. N-acetylated by NAT3.

It localises to the cytoplasm. The protein resides in the nucleus. Functionally, the 26S proteasome is involved in the ATP-dependent degradation of ubiquitinated proteins. The regulatory (or ATPase) complex confers ATP dependency and substrate specificity to the 26S complex. The polypeptide is 26S proteasome regulatory subunit 6B homolog (RPT3) (Saccharomyces cerevisiae (strain ATCC 204508 / S288c) (Baker's yeast)).